We begin with the raw amino-acid sequence, 300 residues long: Cation-efflux pump FieF (300 aa).

Transmembrane regions (helical) follow at residues 11 to 31 (LAAV…VFAW), 40 to 60 (LASL…LLVV), 81 to 101 (LAAL…ILTG), and 114 to 134 (PEVG…LVSF). Zn(2+) contacts are provided by aspartate 45 and aspartate 49. The Zn(2+) site is built by histidine 153 and aspartate 157. 2 helical membrane passes run 156–176 (SDLL…KGIT) and 182–202 (FALG…YDAV).

The protein belongs to the cation diffusion facilitator (CDF) transporter (TC 2.A.4) family. FieF subfamily. In terms of assembly, homodimer.

The protein localises to the cell inner membrane. It catalyses the reaction Zn(2+)(in) + H(+)(out) = Zn(2+)(out) + H(+)(in). It carries out the reaction Cd(2+)(in) + H(+)(out) = Cd(2+)(out) + H(+)(in). The catalysed reaction is Fe(2+)(in) + H(+)(out) = Fe(2+)(out) + H(+)(in). Functionally, divalent metal cation transporter which exports Zn(2+), Cd(2+) and possibly Fe(2+). May be involved in zinc and iron detoxification by efflux. The protein is Cation-efflux pump FieF of Pectobacterium atrosepticum (strain SCRI 1043 / ATCC BAA-672) (Erwinia carotovora subsp. atroseptica).